A 1543-amino-acid polypeptide reads, in one-letter code: ABC multidrug transporter AFR1 (1543 aa).

Residues 1–85 are disordered; it reads MSAAGVPAEL…DGKQKRLPAD (85 aa). Residues 18–41 are compositionally biased toward polar residues; the sequence is TATTQNPSGLANSQVTSGPVSSAT. Positions 62–83 are enriched in basic and acidic residues; the sequence is AVEAEKAEAIDAAGDGKQKRLP. N-linked (GlcNAc...) asparagine glycosylation occurs at Asn-117. The disordered stretch occupies residues 119–157; sequence SQRSQHELHRPTTRHSVRSSFSRKDRVVSRLTQDDAEKA. Positions 140–157 are enriched in basic and acidic residues; that stretch reads SRKDRVVSRLTQDDAEKA. Asn-208 and Asn-398 each carry an N-linked (GlcNAc...) asparagine glycan. Residues 222-474 enclose the ABC transporter 1 domain; that stretch reads IKVLGIFGFN…MIGLGYRDLP (253 aa). A run of 5 helical transmembrane segments spans residues 585-605, 619-639, 670-690, 695-715, and 727-747; these read FGISTGFATSIIIALIVGSVY, GGLLFLGLLFNALTSFSELPS, VPYNASVIFLFSIVLYFMGGL, GAFFMFFLFVFLTFMVMSAFF, and VAARLASVLISFMVTYTGYMI. Asn-823 is a glycosylation site (N-linked (GlcNAc...) asparagine). A helical transmembrane segment spans residues 845-865; that stretch reads FGILLGFFTFFMFLQMLFIEV. Residues 918 to 1160 enclose the ABC transporter 2 domain; sequence FTWEGLSYTV…VLIDYLERNG (243 aa). 954–961 provides a ligand contact to ATP; that stretch reads GASGAGKT. N-linked (GlcNAc...) asparagine glycosylation is present at Asn-1223. A run of 6 helical transmembrane segments spans residues 1254 to 1274, 1285 to 1305, 1336 to 1356, 1366 to 1386, 1391 to 1411, and 1517 to 1537; these read WTRLFAHLAIGLIVTLTFLQL, VFAIFFATVLPALILAQIEPQ, MPYSLGCAVSFFLLLYYGVGF, FFLMILVTEVYAVTLGQAVAA, ILIAALFNPFLLVLFSIFCGV, and FGIFICYVVFNILVLLIAARF.

The protein belongs to the ABC transporter superfamily. ABCG family. PDR (TC 3.A.1.205) subfamily.

Its subcellular location is the cell membrane. The catalysed reaction is itraconazole(in) + ATP + H2O = itraconazole(out) + ADP + phosphate + H(+). The enzyme catalyses voriconazole(in) + ATP + H2O = voriconazole(out) + ADP + phosphate + H(+). It carries out the reaction fluconazole(in) + ATP + H2O = fluconazole(out) + ADP + phosphate + H(+). In terms of biological role, major pleiotropic ABC efflux transporter that confers resistance to structurally and functionally unrelated compounds including azoles such as fluconazole (FLC), itraconazole (ITC), posaconazole (POS), and voriconazole (VRC). Is also able to efflux the eukaryote protein synthesis inhibitor cycloheximide (CHX). The chain is ABC multidrug transporter AFR1 from Cryptococcus neoformans var. grubii serotype A (strain H99 / ATCC 208821 / CBS 10515 / FGSC 9487) (Filobasidiella neoformans var. grubii).